We begin with the raw amino-acid sequence, 632 residues long: 1-deoxy-D-xylulose-5-phosphate synthase (632 aa).

Thiamine diphosphate-binding positions include His-74 and 115 to 117; that span reads AHS. Asp-146 is a binding site for Mg(2+). Thiamine diphosphate-binding positions include 147-148, Asn-176, Tyr-283, and Glu-365; that span reads GA. Asn-176 contacts Mg(2+).

It belongs to the transketolase family. DXPS subfamily. As to quaternary structure, homodimer. It depends on Mg(2+) as a cofactor. The cofactor is thiamine diphosphate.

It carries out the reaction D-glyceraldehyde 3-phosphate + pyruvate + H(+) = 1-deoxy-D-xylulose 5-phosphate + CO2. It functions in the pathway metabolic intermediate biosynthesis; 1-deoxy-D-xylulose 5-phosphate biosynthesis; 1-deoxy-D-xylulose 5-phosphate from D-glyceraldehyde 3-phosphate and pyruvate: step 1/1. Its function is as follows. Catalyzes the acyloin condensation reaction between C atoms 2 and 3 of pyruvate and glyceraldehyde 3-phosphate to yield 1-deoxy-D-xylulose-5-phosphate (DXP). The chain is 1-deoxy-D-xylulose-5-phosphate synthase from Paraburkholderia phymatum (strain DSM 17167 / CIP 108236 / LMG 21445 / STM815) (Burkholderia phymatum).